The primary structure comprises 349 residues: Delta(7)-sterol 5(6)-desaturase ERG3A (349 aa).

3 consecutive transmembrane segments (helical) span residues 84–104 (ITWIFGLLVYFIVATLSYIFI), 124–144 (IIAANKAMPVMAIITAPFFLL), and 162–182 (LWYDFFQFPLFLLFTDFCIYW). In terms of domain architecture, Fatty acid hydroxylase spans 170 to 296 (PLFLLFTDFC…FTAFDRMGGT (127 aa)). A Histidine box-1 motif is present at residues 184–188 (HRWLH). Positions 197 to 201 (HKLHH) match the Histidine box-2 motif. The helical transmembrane segment at 227–247 (HIFPFIFPLQKMAYVALFVFV) threads the bilayer. The Histidine box-3 signature appears at 272–276 (HSLHH).

Belongs to the sterol desaturase family.

The protein localises to the endoplasmic reticulum membrane. The enzyme catalyses episterol + 2 Fe(II)-[cytochrome b5] + O2 + 2 H(+) = 5-dehydroepisterol + 2 Fe(III)-[cytochrome b5] + 2 H2O. It functions in the pathway steroid metabolism; ergosterol biosynthesis. Functionally, C-5 sterol desaturase; part of the third module of ergosterol biosynthesis pathway that includes the late steps of the pathway. ERG3A and ERG3BB catalyze the introduction of a C-5 double bond in the B ring to produce 5-dehydroepisterol. The third module or late pathway involves the ergosterol synthesis itself through consecutive reactions that mainly occur in the endoplasmic reticulum (ER) membrane. Firstly, the squalene synthase ERG9 catalyzes the condensation of 2 farnesyl pyrophosphate moieties to form squalene, which is the precursor of all steroids. Squalene synthase is crucial for balancing the incorporation of farnesyl diphosphate (FPP) into sterol and nonsterol isoprene synthesis. Secondly, squalene is converted into lanosterol by the consecutive action of the squalene epoxidase ERG1 and the lanosterol synthase ERG7. Then, the delta(24)-sterol C-methyltransferase ERG6 methylates lanosterol at C-24 to produce eburicol. Eburicol is the substrate of the sterol 14-alpha demethylase encoded by CYP51A, CYP51B and CYP51C, to yield 4,4,24-trimethyl ergosta-8,14,24(28)-trienol. CYP51B encodes the enzyme primarily responsible for sterol 14-alpha-demethylation, and plays an essential role in ascospore formation. CYP51A encodes an additional sterol 14-alpha-demethylase, induced on ergosterol depletion and responsible for the intrinsic variation in azole sensitivity. The third CYP51 isoform, CYP51C, does not encode a sterol 14-alpha-demethylase, but is required for full virulence on host wheat ears. The C-14 reductase ERG24 then reduces the C14=C15 double bond which leads to 4,4-dimethylfecosterol. A sequence of further demethylations at C-4, involving the C-4 demethylation complex containing the C-4 methylsterol oxidases ERG25, the sterol-4-alpha-carboxylate 3-dehydrogenase ERG26 and the 3-keto-steroid reductase ERG27, leads to the production of fecosterol via 4-methylfecosterol. ERG28 has a role as a scaffold to help anchor ERG25, ERG26 and ERG27 to the endoplasmic reticulum. The C-8 sterol isomerase ERG2 then catalyzes the reaction which results in unsaturation at C-7 in the B ring of sterols and thus converts fecosterol to episterol. The sterol-C5-desaturases ERG3A and ERG3BB then catalyze the introduction of a C-5 double bond in the B ring to produce 5-dehydroepisterol. The C-22 sterol desaturases ERG5A and ERG5B further convert 5-dehydroepisterol into ergosta-5,7,22,24(28)-tetraen-3beta-ol by forming the C-22(23) double bond in the sterol side chain. Finally, ergosta-5,7,22,24(28)-tetraen-3beta-ol is substrate of the C-24(28) sterol reductase ERG4 to produce ergosterol. The sequence is that of Delta(7)-sterol 5(6)-desaturase ERG3A from Gibberella zeae (strain ATCC MYA-4620 / CBS 123657 / FGSC 9075 / NRRL 31084 / PH-1) (Wheat head blight fungus).